A 422-amino-acid polypeptide reads, in one-letter code: Probable glucuronosyltransferase Os01g0926400 (422 aa).

Topologically, residues 1-8 are cytoplasmic; sequence MGTRPCAG. Residues 9–29 traverse the membrane as a helical; Signal-anchor for type II membrane protein segment; sequence VASAVAAAVAVLLLAVSCFAA. At 30-422 the chain is on the lumenal side; sequence AATTTQKHGR…QGLENDLKPW (393 aa). Asn149 carries N-linked (GlcNAc...) asparagine glycosylation.

This sequence belongs to the glycosyltransferase 47 family.

Its subcellular location is the golgi apparatus membrane. In terms of biological role, involved in the synthesis of glucuronoxylan hemicellulose in secondary cell walls. The protein is Probable glucuronosyltransferase Os01g0926400 of Oryza sativa subsp. japonica (Rice).